Reading from the N-terminus, the 1430-residue chain is FYVE, RhoGEF and PH domain-containing protein 6 (1430 aa).

Residues 1 to 36 (MTSAAEIKKPPVAPKPKFVVANNKPAPPPIAPKPDI) are disordered. The span at 15–24 (KPKFVVANNK) shows a compositional bias: low complexity. A Phosphoserine modification is found at Ser231. A disordered region spans residues 330–351 (CVDTPSESTEEPGNSDSSSSCL). Residues 334-351 (PSESTEEPGNSDSSSSCL) show a composition bias toward polar residues. A Phosphoserine modification is found at Ser515. A disordered region spans residues 516 to 538 (EELLEKSSYPSSEEKSSEKSLER). Positions 527 to 538 (SEEKSSEKSLER) are enriched in basic and acidic residues. Phosphoserine is present on residues Ser554, Ser605, Ser692, and Ser721. Disordered regions lie at residues 695-739 (NYSL…PYKS) and 800-869 (PDGQ…NGMK). A compositionally biased stretch (polar residues) spans 728–739 (SRESSSQAPYKS). Acidic residues predominate over residues 831 to 847 (PSDEEEIINSSDEDDVS). Over residues 851–868 (SKGEPDPLEDKQDEDNGM) the composition is skewed to basic and acidic residues. The region spanning 871-1060 (KVHHIAKEIM…IEVANHANDT (190 aa)) is the DH domain. Positions 1089 to 1183 (VFLKEGILMK…WLEAISRAIE (95 aa)) constitute a PH 1 domain. Position 1197 is a phosphoserine (Ser1197). The FYVE-type zinc finger occupies 1222 to 1281 (DTRATMCMICTSEFTLTWRRHHCRACGKIVCQACSSNKYGLDYLKNQPARVCEHCFQELQ). Residues Cys1228, Cys1231, Cys1244, Cys1247, Cys1252, Cys1255, Cys1273, and Cys1276 each coordinate Zn(2+). Residues 1333-1429 (DSSMSGYLYR…WIEAFQEGTI (97 aa)) enclose the PH 2 domain.

The protein localises to the cytoplasm. Its subcellular location is the cytoskeleton. Functionally, may activate CDC42, a member of the Ras-like family of Rho- and Rac proteins, by exchanging bound GDP for free GTP. May play a role in regulating the actin cytoskeleton and cell shape. The sequence is that of FYVE, RhoGEF and PH domain-containing protein 6 (FGD6) from Homo sapiens (Human).